Here is an 847-residue protein sequence, read N- to C-terminus: Phenylalanine--tRNA ligase beta subunit (847 aa).

The region spanning 40-168 (FGIEGPVVVG…LDPEVGADAV (129 aa)) is the tRNA-binding domain. Residues 426 to 501 (ADAEPIRLPD…RIVGFDRIPS (76 aa)) enclose the B5 domain. The Mg(2+) site is built by D479, D485, E488, and E489. Residues 753–846 (AGFPAATQDL…AGQLFGAAIR (94 aa)) form the FDX-ACB domain.

It belongs to the phenylalanyl-tRNA synthetase beta subunit family. Type 1 subfamily. In terms of assembly, tetramer of two alpha and two beta subunits. Mg(2+) is required as a cofactor.

It localises to the cytoplasm. It carries out the reaction tRNA(Phe) + L-phenylalanine + ATP = L-phenylalanyl-tRNA(Phe) + AMP + diphosphate + H(+). In Leifsonia xyli subsp. xyli (strain CTCB07), this protein is Phenylalanine--tRNA ligase beta subunit.